The sequence spans 305 residues: Ribosomal RNA small subunit methyltransferase H (305 aa).

S-adenosyl-L-methionine contacts are provided by residues 46 to 48 (GGH), aspartate 65, phenylalanine 92, aspartate 108, and histidine 115.

It belongs to the methyltransferase superfamily. RsmH family.

The protein localises to the cytoplasm. It catalyses the reaction cytidine(1402) in 16S rRNA + S-adenosyl-L-methionine = N(4)-methylcytidine(1402) in 16S rRNA + S-adenosyl-L-homocysteine + H(+). Its function is as follows. Specifically methylates the N4 position of cytidine in position 1402 (C1402) of 16S rRNA. In Trichormus variabilis (strain ATCC 29413 / PCC 7937) (Anabaena variabilis), this protein is Ribosomal RNA small subunit methyltransferase H.